The following is a 24-amino-acid chain: Small ribosomal subunit protein uS19c (24 aa).

Belongs to the universal ribosomal protein uS19 family.

It localises to the plastid. It is found in the chloroplast. Its function is as follows. Protein S19 forms a complex with S13 that binds strongly to the 16S ribosomal RNA. This is Small ribosomal subunit protein uS19c (rps19) from Petunia hybrida (Petunia).